The sequence spans 275 residues: Phosphate import ATP-binding protein PstB 2 (275 aa).

In terms of domain architecture, ABC transporter spans 29 to 270 (LEVKNLNIYY…PSEKKTEDYI (242 aa)). An ATP-binding site is contributed by 61–68 (GPSGCGKS).

Belongs to the ABC transporter superfamily. Phosphate importer (TC 3.A.1.7) family. As to quaternary structure, the complex is composed of two ATP-binding proteins (PstB), two transmembrane proteins (PstC and PstA) and a solute-binding protein (PstS).

Its subcellular location is the cell membrane. The catalysed reaction is phosphate(out) + ATP + H2O = ADP + 2 phosphate(in) + H(+). Its function is as follows. Part of the ABC transporter complex PstSACB involved in phosphate import. Responsible for energy coupling to the transport system. In Bacillus licheniformis (strain ATCC 14580 / DSM 13 / JCM 2505 / CCUG 7422 / NBRC 12200 / NCIMB 9375 / NCTC 10341 / NRRL NRS-1264 / Gibson 46), this protein is Phosphate import ATP-binding protein PstB 2.